The following is a 161-amino-acid chain: Small ribosomal subunit protein uS19 (161 aa).

The segment covering 1 to 19 has biased composition (basic residues); that stretch reads MARQKKYSGKGGARKKNKQ. Residues 1-26 are disordered; the sequence is MARQKKYSGKGGARKKNKQKQNVAPR.

Belongs to the universal ribosomal protein uS19 family.

Protein S19 forms a complex with S13 that binds strongly to the 16S ribosomal RNA. The protein is Small ribosomal subunit protein uS19 of Methanococcus maripaludis (strain C5 / ATCC BAA-1333).